A 72-amino-acid polypeptide reads, in one-letter code: Translation initiation factor IF-1 (72 aa).

One can recognise an S1-like domain in the interval 1–72; sequence MAKDDVIQMQ…SRARIVFRAK (72 aa).

This sequence belongs to the IF-1 family. In terms of assembly, component of the 30S ribosomal translation pre-initiation complex which assembles on the 30S ribosome in the order IF-2 and IF-3, IF-1 and N-formylmethionyl-tRNA(fMet); mRNA recruitment can occur at any time during PIC assembly.

The protein localises to the cytoplasm. One of the essential components for the initiation of protein synthesis. Stabilizes the binding of IF-2 and IF-3 on the 30S subunit to which N-formylmethionyl-tRNA(fMet) subsequently binds. Helps modulate mRNA selection, yielding the 30S pre-initiation complex (PIC). Upon addition of the 50S ribosomal subunit IF-1, IF-2 and IF-3 are released leaving the mature 70S translation initiation complex. This Burkholderia thailandensis (strain ATCC 700388 / DSM 13276 / CCUG 48851 / CIP 106301 / E264) protein is Translation initiation factor IF-1.